An 812-amino-acid polypeptide reads, in one-letter code: MKITKNKILKNKKIINFKYQKLLDLFYNVNNQKKNNQLLSYLYSFSGKIIFSLTEEKSLKKILRFLMRHKIHPQYIKRIIDIKKEIDYFYMIEEIKNGFIDKKNNILFLCTKDLLPILIDDKYIGNIKKNTNNINKFNLSQLILNHPVMHIEHGIGRYKGLTTIETASIQSEYLVISYAEGDKLYVPVSNLHLVSPYTGTSIENAPLHKLGGDDWNKEKHKISKTVYDHAAQLLHIYAKRESKTGFAFKKNIEKYDLFCNDCSFKTTSDQNEVMKFVLKDMSKPIPMDRLICGDVGFGKTEIAMRASFLAVSNKKQVAILVPTTLLAQQHYKNFKIRFSNWPVNINILSRFQTQKEQDLIFKHTKNGRINIIIGTHKLLFKNIEWCSLGLLIIDEEHRFGVSHKEIIKKIYSNIDILTLTATPIPRTLNMAMTGIKDLSIIAKPPAQRLAIKTFIQEYSPILIRKTILREISRGGQVYYIYNKVQNIMNIAERLSILIPEASIKIGHGQMKNIDLKKVMNEFYNNKFNVLICTTIIESGVDIARANTIIIENSDHFGLSQLHQLRGRIGRSNNQAYALLLVNNFNKITSDAKKRLEAISSVDNFGGGFSLSNQDLEIRGVGEILGKEQSGHIKNIGFSLYMDLLKNAIDLLKNGKIFSVEKSLKKPLEIDLHVSSLLPSSYILDINTRLFFYKKLANAIHEKQIEEIKYELIDQFGKLPDFSKNLILIAKIRLIADKIGIKYIKSNNNIGIIEFNDYGSINTEYLLKMFQKEPKIWKMETSTRIKFILHLKNDYLRLKWIINLLRNLFKKNI.

Residues 280 to 441 form the Helicase ATP-binding domain; the sequence is DMSKPIPMDR…MTGIKDLSII (162 aa). 293–300 contacts ATP; the sequence is GDVGFGKT. Residues 394–397 carry the DEEH box motif; it reads DEEH. The Helicase C-terminal domain occupies 462–621; it reads LIRKTILREI…NQDLEIRGVG (160 aa).

It in the N-terminal section; belongs to the UvrB family. This sequence in the C-terminal section; belongs to the helicase family. RecG subfamily.

It is found in the cytoplasm. Couples transcription and DNA repair by recognizing RNA polymerase (RNAP) stalled at DNA lesions. Mediates ATP-dependent release of RNAP and its truncated transcript from the DNA, and recruitment of nucleotide excision repair machinery to the damaged site. The sequence is that of Transcription-repair-coupling factor (mfd) from Buchnera aphidicola subsp. Acyrthosiphon pisum (strain APS) (Acyrthosiphon pisum symbiotic bacterium).